The primary structure comprises 160 residues: Vegetative-specific protein V4 (160 aa).

Repeat copies occupy residues 151–153, 154–156, and 157–159. The tract at residues 151-159 is 3 X 3 AA tandem repeats of N-Q-[PG]; the sequence is NQPNQPNQG.

Unknown. Its expression during growth is not required for growth but for the proper initiation of development, therefore playing a role in the transition from growth to development. The protein is Vegetative-specific protein V4 (lmcB) of Dictyostelium discoideum (Social amoeba).